The chain runs to 471 residues: 6-phosphofructo-2-kinase/fructose-2,6-bisphosphatase 1 (471 aa).

The residue at position 2 (serine 2) is an N-acetylserine. The 6-phosphofructo-2-kinase stretch occupies residues 2–250 (SPEMGELTQT…VYYLMNIHVT (249 aa)). Position 33 is a phosphoserine; by PKA (serine 33). 49–57 (GLPARGKTY) provides a ligand contact to ATP. Residues arginine 82 and arginine 105 each coordinate beta-D-fructose 6-phosphate. Residue aspartate 131 is part of the active site. Residues threonine 133 and arginine 139 each contribute to the beta-D-fructose 6-phosphate site. Position 141 is a phosphoserine (serine 141). Cysteine 161 is an active-site residue. 170-175 (NIRQVK) lines the ATP pocket. Beta-D-fructose 6-phosphate is bound by residues lysine 175, arginine 196, and tyrosine 200. The segment at 251–471 (PRSIYLCRHG…EALDTVPAHY (221 aa)) is fructose-2,6-bisphosphatase. Arginine 258 is a beta-D-fructose 2,6-bisphosphate binding site. The active-site Tele-phosphohistidine intermediate is histidine 259. Beta-D-fructose 2,6-bisphosphate contacts are provided by asparagine 265, glycine 271, and arginine 308. Glutamate 328 acts as the Proton donor/acceptor in catalysis. Tyrosine 339, arginine 353, lysine 357, tyrosine 368, glutamine 394, and arginine 398 together coordinate beta-D-fructose 2,6-bisphosphate. 350–353 (FALR) contacts ATP. ATP-binding positions include 394–398 (QAVMR) and tyrosine 430.

In the C-terminal section; belongs to the phosphoglycerate mutase family. Homodimer. In terms of tissue distribution, liver.

It catalyses the reaction beta-D-fructose 2,6-bisphosphate + H2O = beta-D-fructose 6-phosphate + phosphate. The catalysed reaction is beta-D-fructose 6-phosphate + ATP = beta-D-fructose 2,6-bisphosphate + ADP + H(+). With respect to regulation, phosphorylation at Ser-33 inhibits the kinase and activates the bisphosphatase. Functionally, synthesis and degradation of fructose 2,6-bisphosphate. The sequence is that of 6-phosphofructo-2-kinase/fructose-2,6-bisphosphatase 1 from Homo sapiens (Human).